A 273-amino-acid chain; its full sequence is 5-deoxy-glucuronate isomerase (273 aa).

Belongs to the isomerase IolB family.

It carries out the reaction 5-deoxy-D-glucuronate = 5-dehydro-2-deoxy-D-gluconate. It participates in polyol metabolism; myo-inositol degradation into acetyl-CoA; acetyl-CoA from myo-inositol: step 4/7. Its function is as follows. Involved in the isomerization of 5-deoxy-glucuronate (5DG) to 5-dehydro-2-deoxy-D-gluconate (DKG or 2-deoxy-5-keto-D-gluconate). In Listeria monocytogenes serotype 4a (strain HCC23), this protein is 5-deoxy-glucuronate isomerase.